Consider the following 222-residue polypeptide: 7-cyano-7-deazaguanine synthase (222 aa).

8 to 18 is a binding site for ATP; that stretch reads LSGGMDSTTLA. Residues Cys-188, Cys-196, Cys-199, and Cys-202 each contribute to the Zn(2+) site.

Belongs to the QueC family. It depends on Zn(2+) as a cofactor.

The enzyme catalyses 7-carboxy-7-deazaguanine + NH4(+) + ATP = 7-cyano-7-deazaguanine + ADP + phosphate + H2O + H(+). Its pathway is purine metabolism; 7-cyano-7-deazaguanine biosynthesis. Functionally, catalyzes the ATP-dependent conversion of 7-carboxy-7-deazaguanine (CDG) to 7-cyano-7-deazaguanine (preQ(0)). The protein is 7-cyano-7-deazaguanine synthase of Methanoculleus marisnigri (strain ATCC 35101 / DSM 1498 / JR1).